A 427-amino-acid chain; its full sequence is 3-phosphoshikimate 1-carboxyvinyltransferase (427 aa).

The 3-phosphoshikimate site is built by Lys20, Ser21, and Arg25. Residue Lys20 coordinates phosphoenolpyruvate. Phosphoenolpyruvate is bound by residues Gly92 and Arg120. 3-phosphoshikimate is bound by residues Ser166, Gln168, Asp312, and Lys339. Gln168 contributes to the phosphoenolpyruvate binding site. Asp312 functions as the Proton acceptor in the catalytic mechanism. Arg343 and Arg385 together coordinate phosphoenolpyruvate.

The protein belongs to the EPSP synthase family. Monomer.

It is found in the cytoplasm. The catalysed reaction is 3-phosphoshikimate + phosphoenolpyruvate = 5-O-(1-carboxyvinyl)-3-phosphoshikimate + phosphate. Its pathway is metabolic intermediate biosynthesis; chorismate biosynthesis; chorismate from D-erythrose 4-phosphate and phosphoenolpyruvate: step 6/7. Catalyzes the transfer of the enolpyruvyl moiety of phosphoenolpyruvate (PEP) to the 5-hydroxyl of shikimate-3-phosphate (S3P) to produce enolpyruvyl shikimate-3-phosphate and inorganic phosphate. The polypeptide is 3-phosphoshikimate 1-carboxyvinyltransferase (Streptococcus pneumoniae (strain Hungary19A-6)).